We begin with the raw amino-acid sequence, 396 residues long: Bone morphogenetic protein 2 (396 aa).

The signal sequence occupies residues 1-23 (MVAGTRCLLALLLPQVLLGGAAG). A propeptide spans 24-282 (LIPELGRRKF…GHPLHRREKR (259 aa)) (cleaved by PCSK5). At Ser87 the chain carries Phosphoserine. N-linked (GlcNAc...) asparagine glycosylation is found at Asn135, Asn163, Asn164, and Asn200. Residues 272-293 (KGHPLHRREKRQAKHKQRKRLK) form a disordered region. Residues 274–293 (HPLHRREKRQAKHKQRKRLK) show a composition bias toward basic residues. 3 disulfides stabilise this stretch: Cys296–Cys361, Cys325–Cys393, and Cys329–Cys395. N-linked (GlcNAc...) asparagine glycosylation is present at Asn338.

The protein belongs to the TGF-beta family. Homodimer; disulfide-linked. Interacts with SOSTDC1. Interacts with GREM2, RGMA, RGMB and RGMC. Interacts with ASPN. Interacts with MAFP5. Interacts with FBN1 (via N-terminal domain) and FBN2. Interacts with type I receptor BMPR1A. Interacts with type II receptor BMPR2. Interacts with ERFE. Interacts with BMPR1A/ALK3; the interaction may induce HAMP expression. Interacts with TGFBR3.

Its subcellular location is the secreted. Its function is as follows. Growth factor of the TGF-beta superfamily that plays essential roles in many developmental processes, including cardiogenesis, neurogenesis, and osteogenesis. Induces cartilage and bone formation. Initiates the canonical BMP signaling cascade by associating with type I receptor BMPR1A and type II receptor BMPR2. Once all three components are bound together in a complex at the cell surface, BMPR2 phosphorylates and activates BMPR1A. In turn, BMPR1A propagates signal by phosphorylating SMAD1/5/8 that travel to the nucleus and act as activators and repressors of transcription of target genes. Also acts to promote expression of HAMP, via the interaction with its receptor BMPR1A/ALK3. Can also signal through non-canonical pathways such as ERK/MAP kinase signaling cascade that regulates osteoblast differentiation. Also stimulates the differentiation of myoblasts into osteoblasts via the EIF2AK3-EIF2A-ATF4 pathway by stimulating EIF2A phosphorylation which leads to increased expression of ATF4 which plays a central role in osteoblast differentiation. Acts as a positive regulator of odontoblast differentiation during mesenchymal tooth germ formation, expression is repressed during the bell stage by MSX1-mediated inhibition of CTNNB1 signaling. This is Bone morphogenetic protein 2 (BMP2) from Dama dama (Fallow deer).